The primary structure comprises 233 residues: Antiholin-like protein LrgB (233 aa).

Helical transmembrane passes span 5 to 25, 33 to 53, 63 to 83, 97 to 117, 152 to 172, and 212 to 232; these read LGINTPYFGILVSLIPFVIAT, GFFLLAPLFVSMVAGIAFLKL, IGGDIINFFLEPATICFAIPL, IFGGIAVGTIIALLLIYLVAI, LTSLAVILNAVVISALGAKIV, and IAVVIVGVIVVAVVPILAPIL.

The protein belongs to the CidB/LrgB family. LrgB subfamily.

The protein localises to the cell membrane. Inhibits the expression or activity of extracellular murein hydrolases by interacting, possibly with LrgA, with the holin-like proteins CidA and/or CidB. The LrgAB and CidAB proteins may affect the proton motive force of the membrane. May be involved in programmed cell death (PCD), possibly triggering PCD in response to antibiotics and environmental stresses. The sequence is that of Antiholin-like protein LrgB from Staphylococcus epidermidis (strain ATCC 35984 / DSM 28319 / BCRC 17069 / CCUG 31568 / BM 3577 / RP62A).